The chain runs to 931 residues: G patch domain-containing protein 1 (931 aa).

Disordered stretches follow at residues 1-41 (MAAR…TVRD), 73-92 (PSTF…LGPE), and 169-209 (QGVG…EDDD). Alanine 2 bears the N-acetylalanine mark. 2 positions are modified to phosphoserine: serine 6 and serine 8. In terms of domain architecture, G-patch spans 152-198 (KLSVGFELLRKMGWKEGQGVGPRVKRRPRRQKPDPGVKIYGCALPPG). Lysine 312 participates in a covalent cross-link: Glycyl lysine isopeptide (Lys-Gly) (interchain with G-Cter in SUMO2). Residues serine 357 and serine 477 each carry the phosphoserine modification. Disordered regions lie at residues 568–595 (RFTH…GDKQ) and 659–931 (LPTT…LRRQ). The span at 582–593 (EVPRDQENDVGD) shows a compositional bias: basic and acidic residues. Polar residues predominate over residues 659 to 668 (LPTTQASSEK). The span at 669–695 (VSQHRGPDKSRKPSRWDTSKHEKKEDS) shows a compositional bias: basic and acidic residues. Position 715 is a phosphoserine (serine 715). The segment covering 769–780 (SEDEQGDSEDDQ) has biased composition (acidic residues). Over residues 786 to 802 (ANFQSSQDTDLGETSSV) the composition is skewed to polar residues. Residues 852–888 (EKHKKNKDKHKAKKEHRRKKEKKKKHRKHKHKGKQKN) are compositionally biased toward basic residues. Residues 896 to 905 (SSESSDSSDS) are compositionally biased toward low complexity. The span at 922–931 (RLKSLPLRRQ) shows a compositional bias: basic residues.

This sequence belongs to the GPATCH1 family.

The polypeptide is G patch domain-containing protein 1 (GPATCH1) (Homo sapiens (Human)).